A 198-amino-acid chain; its full sequence is Recombination protein RecR (198 aa).

The C4-type zinc-finger motif lies at 57–72 (CEKCNTFTEAQICEVC). In terms of domain architecture, Toprim spans 80 to 175 (TLLCVVETPA…AVTRLARGVP (96 aa)).

It belongs to the RecR family.

Functionally, may play a role in DNA repair. It seems to be involved in an RecBC-independent recombinational process of DNA repair. It may act with RecF and RecO. The protein is Recombination protein RecR of Paraburkholderia phytofirmans (strain DSM 17436 / LMG 22146 / PsJN) (Burkholderia phytofirmans).